A 710-amino-acid polypeptide reads, in one-letter code: ARM REPEAT PROTEIN INTERACTING WITH ABF2 (710 aa).

A disordered region spans residues M1–I35. ARM repeat units follow at residues E85–S127, P138–H185, S188–F227, D230–H269, P272–S311, S314–Q353, A355–D394, L429–S468, and E470–N509. A BTB domain is found at S541–N608.

As to quaternary structure, interacts with ABF2. Interacts with DUF7/AIP1. As to expression, detected in embryos and most of the vegetative and reproductive organs.

It is found in the nucleus. It participates in protein modification; protein ubiquitination. In terms of biological role, may act as a substrate-specific adapter of an E3 ubiquitin-protein ligase complex (CUL3-RBX1-BTB) which mediates the ubiquitination and subsequent proteasomal degradation of target proteins. Acts as a positive regulator of ABA response via the modulation of the transcriptional activity of ABF2, a transcription factor which controls ABA-dependent gene expression via the G-box-type ABA-responsive elements. Negative regulator of seed germination and young seedling growth. The protein is ARM REPEAT PROTEIN INTERACTING WITH ABF2 (ARIA) of Arabidopsis thaliana (Mouse-ear cress).